The sequence spans 417 residues: NADH-quinone oxidoreductase subunit D (417 aa).

The protein belongs to the complex I 49 kDa subunit family. NDH-1 is composed of 14 different subunits. Subunits NuoB, C, D, E, F, and G constitute the peripheral sector of the complex.

The protein resides in the cell inner membrane. The enzyme catalyses a quinone + NADH + 5 H(+)(in) = a quinol + NAD(+) + 4 H(+)(out). In terms of biological role, NDH-1 shuttles electrons from NADH, via FMN and iron-sulfur (Fe-S) centers, to quinones in the respiratory chain. The immediate electron acceptor for the enzyme in this species is believed to be ubiquinone. Couples the redox reaction to proton translocation (for every two electrons transferred, four hydrogen ions are translocated across the cytoplasmic membrane), and thus conserves the redox energy in a proton gradient. In Cupriavidus taiwanensis (strain DSM 17343 / BCRC 17206 / CCUG 44338 / CIP 107171 / LMG 19424 / R1) (Ralstonia taiwanensis (strain LMG 19424)), this protein is NADH-quinone oxidoreductase subunit D.